Here is an 86-residue protein sequence, read N- to C-terminus: Candiduxin-2 (86 aa).

A signal peptide spans Met-1–Thr-21. Cystine bridges form between Cys-24/Cys-45, Cys-38/Cys-62, Cys-66/Cys-78, and Cys-79/Cys-84.

It belongs to the three-finger toxin family. Short-chain subfamily. Orphan group IX sub-subfamily. As to expression, expressed by the venom gland.

It localises to the secreted. The polypeptide is Candiduxin-2 (Bungarus candidus (Malayan krait)).